The following is a 272-amino-acid chain: Putative pyruvate, phosphate dikinase regulatory protein (272 aa).

151–158 contributes to the ADP binding site; that stretch reads GISRTSKT.

This sequence belongs to the pyruvate, phosphate/water dikinase regulatory protein family. PDRP subfamily.

It catalyses the reaction N(tele)-phospho-L-histidyl/L-threonyl-[pyruvate, phosphate dikinase] + ADP = N(tele)-phospho-L-histidyl/O-phospho-L-threonyl-[pyruvate, phosphate dikinase] + AMP + H(+). The enzyme catalyses N(tele)-phospho-L-histidyl/O-phospho-L-threonyl-[pyruvate, phosphate dikinase] + phosphate + H(+) = N(tele)-phospho-L-histidyl/L-threonyl-[pyruvate, phosphate dikinase] + diphosphate. Bifunctional serine/threonine kinase and phosphorylase involved in the regulation of the pyruvate, phosphate dikinase (PPDK) by catalyzing its phosphorylation/dephosphorylation. This chain is Putative pyruvate, phosphate dikinase regulatory protein, found in Staphylococcus aureus (strain Mu3 / ATCC 700698).